Reading from the N-terminus, the 391-residue chain is Pectate lyase B (391 aa).

Positions 1–30 (MKKTVRSLCSTALALTLGFTLLSGPASVQA) are cleaved as a signal peptide. Aspartate 181, aspartate 203, and aspartate 207 together coordinate Ca(2+). The active site involves arginine 305.

It belongs to the polysaccharide lyase 1 family. Requires Ca(2+) as cofactor.

The protein localises to the secreted. It carries out the reaction Eliminative cleavage of (1-&gt;4)-alpha-D-galacturonan to give oligosaccharides with 4-deoxy-alpha-D-galact-4-enuronosyl groups at their non-reducing ends.. The catalysed reaction is Eliminative cleavage of (1-&gt;4)-alpha-D-galacturonan methyl ester to give oligosaccharides with 4-deoxy-6-O-methyl-alpha-D-galact-4-enuronosyl groups at their non-reducing ends.. Its pathway is glycan metabolism; pectin degradation. Functionally, catalyzes the depolymerization of both polygalacturonate and pectins of various methyl esterification degree, with an endo mode of action. Shows the highest activity on 20 to 34% methylated pectin but retains 67%, 51%, 25%, and 1% of its maximum activity on polygalacturonate and 8.5%, 55 to 70%, and 90% methylated pectin, respectively. This chain is Pectate lyase B, found in Paenibacillus amylolyticus.